Consider the following 98-residue polypeptide: DNA-binding protein Fis (98 aa).

Positions 74 to 93 (QTRAATMMGINRGTLRKKLK) form a DNA-binding region, H-T-H motif.

It belongs to the transcriptional regulatory Fis family. As to quaternary structure, homodimer.

Functionally, activates ribosomal RNA transcription. Plays a direct role in upstream activation of rRNA promoters. The chain is DNA-binding protein Fis from Vibrio atlanticus (strain LGP32) (Vibrio splendidus (strain Mel32)).